The primary structure comprises 67 residues: Small ribosomal subunit protein bS21 (67 aa).

It belongs to the bacterial ribosomal protein bS21 family.

The chain is Small ribosomal subunit protein bS21 from Desulfovibrio desulfuricans (strain ATCC 27774 / DSM 6949 / MB).